Reading from the N-terminus, the 405-residue chain is Enoyl-[acyl-carrier-protein] reductase [NADH] (405 aa).

NAD(+)-binding positions include G51–Y56, F77–E78, D114–A115, and L142–A143. Residue Y228 coordinates substrate. Catalysis depends on Y238, which acts as the Proton donor. NAD(+) contacts are provided by residues K247 and V276 to T278.

Belongs to the TER reductase family. In terms of assembly, monomer.

The enzyme catalyses a 2,3-saturated acyl-[ACP] + NAD(+) = a (2E)-enoyl-[ACP] + NADH + H(+). Its pathway is lipid metabolism; fatty acid biosynthesis. Its function is as follows. Involved in the final reduction of the elongation cycle of fatty acid synthesis (FAS II). Catalyzes the reduction of a carbon-carbon double bond in an enoyl moiety that is covalently linked to an acyl carrier protein (ACP). In Chromohalobacter salexigens (strain ATCC BAA-138 / DSM 3043 / CIP 106854 / NCIMB 13768 / 1H11), this protein is Enoyl-[acyl-carrier-protein] reductase [NADH].